Reading from the N-terminus, the 1201-residue chain is HEAT repeat-containing protein 6 (1201 aa).

A disordered region spans residues 1–25; that stretch reads MAGKVTFLGSNSSFSPDGKTQGFKS. An HEAT 1 repeat occupies 182–221; the sequence is PDLLGPSGVLVKYGDPKQPDIELRRSAVHCIANLCLSVPS. The interval 321 to 390 is disordered; sequence AVKPEPAQDT…SQSSMLTSPS (70 aa). A compositionally biased stretch (basic residues) spans 341–352; the sequence is QKKRKSRGKGKK. A compositionally biased stretch (polar residues) spans 375–390; sequence SGWSHGSQSSMLTSPS. HEAT repeat units lie at residues 460 to 498, 523 to 560, and 566 to 603; these read GIGG…GSRQ, SIRE…NVPY, and GLLS…TQAP. A compositionally biased stretch (polar residues) spans 618–633; the sequence is SSLGSGISTPQESPLS. Residues 618–653 are disordered; that stretch reads SSLGSGISTPQESPLSWRQPARRDEEASSPAAAEGP.

The polypeptide is HEAT repeat-containing protein 6 (heatr6) (Danio rerio (Zebrafish)).